Reading from the N-terminus, the 231-residue chain is 4-aminobenzoate synthase (231 aa).

Fe(2+) contacts are provided by Glu81, His88, Glu142, His174, Asp178, and His181.

It belongs to the CADD family. As to quaternary structure, homodimer. During infection, interacts with death domains of mammalian tumor necrosis factor (TNF) family receptors Fas, DR4, DR5 and to some extent TNFR1, but not with the respective downstream adapters. Fe(2+) serves as cofactor. Requires Mn(2+) as cofactor.

The protein localises to the secreted. Its subcellular location is the host cytoplasm. Its activity is regulated as follows. The protein is a cosubstrate rather than a true enzyme and is left in an inactive state after a single turnover. Inactive under anaerobic conditions. Functionally, involved in de novo para-aminobenzoate (PABA) biosynthesis. Acts as a self-sacrificing or 'suicide' enzyme that utilizes its own active site tyrosine residue(s) as the substrate for PABA synthesis. The side chain of the tyrosine residue is released from the protein backbone via cleavage of the C(alpha)-C(beta) bond, leaving a glycine in place of the original tyrosine residue. Reaction requires O(2) and a reduced dimetal cofactor. Its function is as follows. Was also identified as a specific toxin that associates with death domains of tumor necrosis factor family (TNF) receptors and induces apoptosis in mammalian cell lines through a Caspase-dependent mechanism. The chain is 4-aminobenzoate synthase from Chlamydia trachomatis serovar D (strain ATCC VR-885 / DSM 19411 / UW-3/Cx).